A 304-amino-acid polypeptide reads, in one-letter code: Homoserine kinase (304 aa).

Residue 86 to 96 coordinates ATP; it reads PLARGLGSSAA.

This sequence belongs to the GHMP kinase family. Homoserine kinase subfamily.

It localises to the cytoplasm. It carries out the reaction L-homoserine + ATP = O-phospho-L-homoserine + ADP + H(+). The protein operates within amino-acid biosynthesis; L-threonine biosynthesis; L-threonine from L-aspartate: step 4/5. Catalyzes the ATP-dependent phosphorylation of L-homoserine to L-homoserine phosphate. This Carboxydothermus hydrogenoformans (strain ATCC BAA-161 / DSM 6008 / Z-2901) protein is Homoserine kinase.